The sequence spans 104 residues: Thioredoxin 1 (104 aa).

Positions V2 to A104 constitute a Thioredoxin domain. Residues C30 and C33 each act as nucleophile in the active site. C30 and C33 form a disulfide bridge.

Belongs to the thioredoxin family. Post-translationally, the disulfide bond between Cys-30 and Cys-33 acts as a redox-active center and is reduced by thioredoxin reductase TRXR.

The protein resides in the cytoplasm. Functionally, participates in various redox reactions through the reversible oxidation of its active center dithiol to a disulfide and catalyzes dithiol-disulfide exchange reactions. By modifying the redox status of targeted proteins, induces changes in their structure and activity. Reduces oxidized glutathione (GSSG), thereby acting as a backup for the glutathione redox system. Reduces nitroglutathione (GSNO), a compound involved in the transport of nitric oxide (NO). Also reduces oxidative stress by detoxifying hydrogen peroxide, tert-butyl hydroperoxide and cumene hydroperoxide. Activates ornithine aminotransferase OAT by reducing a disulfide bond in the substrate binding loop, thereby enhancing the affinity of OAT for its substrates. May reduce S-adenosyl-L-homocysteine hydrolase SAHH. This chain is Thioredoxin 1, found in Plasmodium falciparum (isolate 3D7).